The following is a 561-amino-acid chain: Urocanate hydratase (561 aa).

Residues 52–53, Gln130, 176–178, Glu196, Arg201, 242–243, 263–267, 273–274, and Tyr322 each bind NAD(+); these read GG, GMG, NA, QTSAH, and YL. Cys410 is an active-site residue. Position 492 (Gly492) interacts with NAD(+).

Belongs to the urocanase family. NAD(+) serves as cofactor.

The protein localises to the cytoplasm. It carries out the reaction 4-imidazolone-5-propanoate = trans-urocanate + H2O. Its pathway is amino-acid degradation; L-histidine degradation into L-glutamate; N-formimidoyl-L-glutamate from L-histidine: step 2/3. Catalyzes the conversion of urocanate to 4-imidazolone-5-propionate. This Enterobacter sp. (strain 638) protein is Urocanate hydratase.